Here is an 84-residue protein sequence, read N- to C-terminus: Small ribosomal subunit protein bS16 (84 aa).

This sequence belongs to the bacterial ribosomal protein bS16 family.

The protein is Small ribosomal subunit protein bS16 of Burkholderia ambifaria (strain MC40-6).